Reading from the N-terminus, the 548-residue chain is C2H2-type transcription factor MSN2 (548 aa).

C2H2-type zinc fingers lie at residues 420–448 and 449–471; these read FKCE…QDKP and FECN…ARTH.

Interacts with HOG1/OSM1.

The protein localises to the nucleus. The protein resides in the cytoplasm. Transcription factor that acts as a key downstream transcription factor in the HOG1-MAPK pathway. Regulates the expression of a series of downstream genes and controls vegetative growth, conidiogenesis, cell wall integrity, stress response, mitochondrial morphology, and pathogenicity. Binds to a putative promoter region 1500 bp upstream of the start codons of the target genes MGG_07019, POX1 and DCI1. Binds to the AGGGG and CCCCT motif of the COS1 promoter region. Involved in fatty acid beta-oxidation by directly regulating the expression of the dienoyl-CoA isomerase DCI1, thereby facilitating invasive hyphal growth during the early infection stage. Targets also the 3-methylglutaconyl-CoA hydratase-encoding gene (AUH1) to control mitochondrial morphology and mitophagy, which are critical for the infectious growth of the pathogen. The chain is C2H2-type transcription factor MSN2 from Pyricularia oryzae (strain 70-15 / ATCC MYA-4617 / FGSC 8958) (Rice blast fungus).